Consider the following 393-residue polypeptide: NAD(P)H-quinone oxidoreductase subunit H, chloroplastic (393 aa).

This sequence belongs to the complex I 49 kDa subunit family. NDH is composed of at least 16 different subunits, 5 of which are encoded in the nucleus.

The protein resides in the plastid. Its subcellular location is the chloroplast thylakoid membrane. It carries out the reaction a plastoquinone + NADH + (n+1) H(+)(in) = a plastoquinol + NAD(+) + n H(+)(out). The enzyme catalyses a plastoquinone + NADPH + (n+1) H(+)(in) = a plastoquinol + NADP(+) + n H(+)(out). NDH shuttles electrons from NAD(P)H:plastoquinone, via FMN and iron-sulfur (Fe-S) centers, to quinones in the photosynthetic chain and possibly in a chloroplast respiratory chain. The immediate electron acceptor for the enzyme in this species is believed to be plastoquinone. Couples the redox reaction to proton translocation, and thus conserves the redox energy in a proton gradient. The sequence is that of NAD(P)H-quinone oxidoreductase subunit H, chloroplastic from Agrostis stolonifera (Creeping bentgrass).